Here is a 112-residue protein sequence, read N- to C-terminus: Putative pterin-4-alpha-carbinolamine dehydratase (112 aa).

It belongs to the pterin-4-alpha-carbinolamine dehydratase family.

It catalyses the reaction (4aS,6R)-4a-hydroxy-L-erythro-5,6,7,8-tetrahydrobiopterin = (6R)-L-erythro-6,7-dihydrobiopterin + H2O. This is Putative pterin-4-alpha-carbinolamine dehydratase from Shewanella denitrificans (strain OS217 / ATCC BAA-1090 / DSM 15013).